The chain runs to 200 residues: Gene 55 protein (200 aa).

Residue Cys-8 is the site of S-palmitoyl cysteine; by host attachment.

This sequence belongs to the herpesviridae UL51 family. Oligomerizes. Interacts with ORF42; this interaction mediates ORF42 incorporation to virions. Phosphorylated. Post-translationally, palmitoylation is necessary for Golgi localization.

It is found in the virion tegument. Its subcellular location is the host cytoplasm. The protein localises to the host Golgi apparatus. Plays several roles during the time course of infection, including egress of virus particles from the perinuclear space and secondary envelopment of cytoplasmic capsids that bud into specific trans-Golgi network (TGN)-derived membranes. The polypeptide is Gene 55 protein (55) (Saimiriine herpesvirus 2 (strain 11) (SaHV-2)).